The chain runs to 192 residues: MSIENTLPTYPSLALALSQQAVALTPAEMHGLISGMLCGGSKDNGWQTLVHDLTNEGVAFPQALSLPLQQLHEATQEALENEGFMFQLLIPEGEDVTVFDRADALSGWVNHFLLGLGMLQPKLAQVKDEVGEAIDDLRNIAQLGYDEDEDQEELAQSLEEVVEYVRVAAILCHIEFTQQKPTAPEMHKPTLH.

Belongs to the UPF0149 family.

This Yersinia pestis protein is UPF0149 protein YPO0911/y3298/YP_3608.